Consider the following 214-residue polypeptide: Serine protease inhibitor 2.1 (214 aa).

It belongs to the serpin family.

The protein is Serine protease inhibitor 2.1 of Rattus norvegicus (Rat).